A 943-amino-acid polypeptide reads, in one-letter code: Leucine--tRNA ligase (943 aa).

The 'HIGH' region signature appears at 40 to 51 (PYPSGAGLHVGH). The short motif at 717–721 (KMSKS) is the 'KMSKS' region element. Lys720 contributes to the ATP binding site.

Belongs to the class-I aminoacyl-tRNA synthetase family.

The protein localises to the cytoplasm. It catalyses the reaction tRNA(Leu) + L-leucine + ATP = L-leucyl-tRNA(Leu) + AMP + diphosphate. The sequence is that of Leucine--tRNA ligase from Bacteroides fragilis (strain ATCC 25285 / DSM 2151 / CCUG 4856 / JCM 11019 / LMG 10263 / NCTC 9343 / Onslow / VPI 2553 / EN-2).